The following is a 936-amino-acid chain: Coiled-coil domain-containing protein 191 (936 aa).

Coiled coils occupy residues 189–270 (RLTM…VKAA) and 364–440 (RDYT…LQAA). The tract at residues 495–541 (LGRTTTGNLQGSLQNVSLSAPGNKQHKTLGAEPSQQPGSNETLRTTS) is disordered. Polar residues-rich tracts occupy residues 497–516 (RTTTGNLQGSLQNVSLSAPG) and 527–541 (PSQQPGSNETLRTTS). A coiled-coil region spans residues 554 to 592 (NRHVFQQQLIEKQKKKLQEQQKTILELKKNLQLAEAQWA). Disordered regions lie at residues 607 to 656 (LSKP…TPHP) and 691 to 714 (KAQEEERQKREAEEKEAQLERKRE). Positions 662–739 (EERAIQRAEC…IKRNQQLEAI (78 aa)) form a coiled coil.

In Homo sapiens (Human), this protein is Coiled-coil domain-containing protein 191 (CCDC191).